We begin with the raw amino-acid sequence, 600 residues long: Sulfite reductase [NADPH] flavoprotein alpha-component (600 aa).

The Flavodoxin-like domain maps to 63–201; the sequence is ITLISASQTG…AAQAWRQRVV (139 aa). FMN-binding positions include 69–74, 116–119, and 152–161; these read SQTGNA, STQG, and LGDTSYEHFC. One can recognise an FAD-binding FR-type domain in the interval 235–449; it reads ESPLTATLSV…IEHNDNFRLP (215 aa). Residues Thr323, Ala357, 387–390, 405–407, and 420–423 contribute to the FAD site; these read RLYS, TVG, and GGAS. Residues 520-521, 526-530, and Asp562 each bind NADP(+); these read SR and KIYVQ. FAD is bound at residue Tyr600.

It belongs to the NADPH-dependent sulphite reductase flavoprotein subunit CysJ family. The protein in the N-terminal section; belongs to the flavodoxin family. In the C-terminal section; belongs to the flavoprotein pyridine nucleotide cytochrome reductase family. As to quaternary structure, alpha(8)-beta(8). The alpha component is a flavoprotein, the beta component is a hemoprotein. FAD serves as cofactor. The cofactor is FMN.

It catalyses the reaction hydrogen sulfide + 3 NADP(+) + 3 H2O = sulfite + 3 NADPH + 4 H(+). Its pathway is sulfur metabolism; hydrogen sulfide biosynthesis; hydrogen sulfide from sulfite (NADPH route): step 1/1. Its function is as follows. Component of the sulfite reductase complex that catalyzes the 6-electron reduction of sulfite to sulfide. This is one of several activities required for the biosynthesis of L-cysteine from sulfate. The flavoprotein component catalyzes the electron flow from NADPH -&gt; FAD -&gt; FMN to the hemoprotein component. This Cronobacter sakazakii (strain ATCC BAA-894) (Enterobacter sakazakii) protein is Sulfite reductase [NADPH] flavoprotein alpha-component.